A 344-amino-acid polypeptide reads, in one-letter code: Phenylalanine--tRNA ligase alpha subunit (344 aa).

E256 provides a ligand contact to Mg(2+).

This sequence belongs to the class-II aminoacyl-tRNA synthetase family. Phe-tRNA synthetase alpha subunit type 1 subfamily. In terms of assembly, tetramer of two alpha and two beta subunits. Mg(2+) is required as a cofactor.

It localises to the cytoplasm. It carries out the reaction tRNA(Phe) + L-phenylalanine + ATP = L-phenylalanyl-tRNA(Phe) + AMP + diphosphate + H(+). In Oceanobacillus iheyensis (strain DSM 14371 / CIP 107618 / JCM 11309 / KCTC 3954 / HTE831), this protein is Phenylalanine--tRNA ligase alpha subunit.